The following is an 834-amino-acid chain: 1,4-alpha-glucan branching enzyme GlgB (834 aa).

Asp511 functions as the Nucleophile in the catalytic mechanism. Glu565 (proton donor) is an active-site residue.

The protein belongs to the glycosyl hydrolase 13 family. GlgB subfamily. Monomer.

It carries out the reaction Transfers a segment of a (1-&gt;4)-alpha-D-glucan chain to a primary hydroxy group in a similar glucan chain.. It participates in glycan biosynthesis; glycogen biosynthesis. Functionally, catalyzes the formation of the alpha-1,6-glucosidic linkages in glycogen by scission of a 1,4-alpha-linked oligosaccharide from growing alpha-1,4-glucan chains and the subsequent attachment of the oligosaccharide to the alpha-1,6 position. In Burkholderia thailandensis (strain ATCC 700388 / DSM 13276 / CCUG 48851 / CIP 106301 / E264), this protein is 1,4-alpha-glucan branching enzyme GlgB (glgB).